Here is a 30-residue protein sequence, read N- to C-terminus: Cyclotide mden-E (30 aa).

Residues 1–30 (GIPCGESCVYIPCITAAIGCSCKSKVCYRN) constitute a cross-link (cyclopeptide (Gly-Asn)). 3 disulfide bridges follow: Cys4–Cys20, Cys8–Cys22, and Cys13–Cys27.

This sequence belongs to the cyclotide family. Bracelet subfamily. Post-translationally, this is a cyclic peptide.

Its function is as follows. Probably participates in a plant defense mechanism. This is Cyclotide mden-E from Melicytus dentatus (Tree violet).